The following is a 312-amino-acid chain: GATA zinc finger domain-containing protein 20 (312 aa).

Disordered stretches follow at residues 1 to 45 (MGKR…PQQP) and 213 to 232 (TIGS…TNTN). The segment covering 29-45 (QQQQQQQEQQPQQPQQP) has biased composition (low complexity). The segment at 260–287 (CYVCGVTETPYWRRGTDEGVMVDLCNAC) adopts a GATA-type zinc-finger fold.

In Dictyostelium discoideum (Social amoeba), this protein is GATA zinc finger domain-containing protein 20 (gtaT).